We begin with the raw amino-acid sequence, 118 residues long: V-type proton ATPase subunit G 2 (118 aa).

A coiled-coil region spans residues Ile8–Ser57. Residues Ala25 to Arg90 form a disordered region. The segment covering Gln35–Phe55 has biased composition (basic and acidic residues). Polar residues-rich tracts occupy residues Gln56 to Leu69 and Arg78 to Gln89.

This sequence belongs to the V-ATPase G subunit family. V-ATPase is a heteromultimeric enzyme made up of two complexes: the ATP-hydrolytic V1 complex and the proton translocation V0 complex. The V1 complex consists of three catalytic AB heterodimers that form a heterohexamer, three peripheral stalks each consisting of EG heterodimers, one central rotor including subunits D and F, and the regulatory subunits C and H. The proton translocation complex V0 consists of the proton transport subunit a, a ring of proteolipid subunits c9c'', rotary subunit d, subunits e and f, and the accessory subunits ATP6AP1/Ac45 and ATP6AP2/PRR. In terms of tissue distribution, expressed in brain (at protein level).

Its subcellular location is the melanosome. The protein localises to the cytoplasmic vesicle. It is found in the clathrin-coated vesicle membrane. Functionally, subunit of the V1 complex of vacuolar(H+)-ATPase (V-ATPase), a multisubunit enzyme composed of a peripheral complex (V1) that hydrolyzes ATP and a membrane integral complex (V0) that translocates protons. V-ATPase is responsible for acidifying and maintaining the pH of intracellular compartments and in some cell types, is targeted to the plasma membrane, where it is responsible for acidifying the extracellular environment. The chain is V-type proton ATPase subunit G 2 from Bos taurus (Bovine).